A 174-amino-acid chain; its full sequence is Co-chaperone protein HscB (174 aa).

Positions 2–74 (DYFTLFGLPA…LKRAEYMLSL (73 aa)) constitute a J domain.

This sequence belongs to the HscB family. In terms of assembly, interacts with HscA and stimulates its ATPase activity. Interacts with IscU.

Co-chaperone involved in the maturation of iron-sulfur cluster-containing proteins. Seems to help targeting proteins to be folded toward HscA. This chain is Co-chaperone protein HscB, found in Yersinia pseudotuberculosis serotype O:1b (strain IP 31758).